A 468-amino-acid chain; its full sequence is Phosphatidylglycerol--prolipoprotein diacylglyceryl transferase (468 aa).

3 helical membrane passes run 21-41 (LPVR…LLIG), 56-76 (YDIA…YHLA), and 96-116 (IWDG…GAWI). A 1,2-diacyl-sn-glycero-3-phospho-(1'-sn-glycerol) is bound at residue arginine 144. The next 3 membrane-spanning stretches (helical) occupy residues 192–212 (VVQP…VALI), 218–238 (FIIG…AGRF), and 256–276 (INSF…ILAP). The segment at 349-468 (VVQVADRDGE…RWWRLRRRRQ (120 aa)) is disordered. A compositionally biased stretch (low complexity) spans 391-406 (AEAASAAPEEPAALAS). Over residues 445–455 (DGIRRQDDFSS) the composition is skewed to basic and acidic residues. The span at 456–468 (RRRRWWRLRRRRQ) shows a compositional bias: basic residues.

It belongs to the Lgt family.

The protein localises to the cell membrane. It carries out the reaction L-cysteinyl-[prolipoprotein] + a 1,2-diacyl-sn-glycero-3-phospho-(1'-sn-glycerol) = an S-1,2-diacyl-sn-glyceryl-L-cysteinyl-[prolipoprotein] + sn-glycerol 1-phosphate + H(+). It functions in the pathway protein modification; lipoprotein biosynthesis (diacylglyceryl transfer). Its function is as follows. Catalyzes the transfer of the diacylglyceryl group from phosphatidylglycerol to the sulfhydryl group of the N-terminal cysteine of a prolipoprotein, the first step in the formation of mature lipoproteins. The sequence is that of Phosphatidylglycerol--prolipoprotein diacylglyceryl transferase from Mycobacterium bovis (strain ATCC BAA-935 / AF2122/97).